The following is a 620-amino-acid chain: 1-deoxy-D-xylulose-5-phosphate synthase (620 aa).

Residues His-80 and 121–123 (GHS) contribute to the thiamine diphosphate site. Asp-152 is a Mg(2+) binding site. Residues 153–154 (GA), Asn-181, Tyr-288, and Glu-370 contribute to the thiamine diphosphate site. Asn-181 provides a ligand contact to Mg(2+).

Belongs to the transketolase family. DXPS subfamily. Homodimer. Requires Mg(2+) as cofactor. The cofactor is thiamine diphosphate.

The catalysed reaction is D-glyceraldehyde 3-phosphate + pyruvate + H(+) = 1-deoxy-D-xylulose 5-phosphate + CO2. Its pathway is metabolic intermediate biosynthesis; 1-deoxy-D-xylulose 5-phosphate biosynthesis; 1-deoxy-D-xylulose 5-phosphate from D-glyceraldehyde 3-phosphate and pyruvate: step 1/1. Its function is as follows. Catalyzes the acyloin condensation reaction between C atoms 2 and 3 of pyruvate and glyceraldehyde 3-phosphate to yield 1-deoxy-D-xylulose-5-phosphate (DXP). The chain is 1-deoxy-D-xylulose-5-phosphate synthase from Photobacterium profundum (strain SS9).